The sequence spans 747 residues: MGDVLSTHLDDARRQNIAEKTEKILREFLRFYEDQYGVSLFNSMRHEIEGTGPPQAQLLWRKVPLDERIIFSGNLFQYQEDNKKWRNRFSLVPHNYGLVLYENKVAYERQIPPRAVINSAGYKVLTSLDQYLELVGNSLPGTTSKSGSTPILKCPTQFPLILWHPYARHYYFCMMTEAEQDKWQAVLQDCVRHCNNGIPENSKVEGPAFTDAIRMYRQSKEQYGTWEMLCGNEVQILSNLVMEELGPALKTELGPRLKGKPQERQRQWIQISDAVYRLVFEQAKVHFEEVLCKLQLARPAMEAVIRTDMDQIITSKEHLASKIRAFILPKAEVCVRNHVQPYIPSILEALMVPTSQGFTEVRDVFFKEVTDMNLNVINEGGIDKLGEYMEKLSQLAYHPLKMQSCYEKMEPLRLDGLQQRFDVSSTSVFKQRAQIHMREQMDNAVYTFETLLHQELGKGPTKEELCKSIQRILERVLKKYDYDSSSVRKRFFREALLQITIPFLLKKLAPTCKSELPRFQELIFEDFARFILVENTYEEVVLQTVMKDILQAVKEAAVQRKHNLYRDSVVLHNSDPNLHLLAEGAPIDWGEQYGDGGDGSDSGGSPCPSEAATLTEKRRRAKQVVSVVQDEESGLPFEAGSEPPSPASPDNVTELRGLLAQDLQAESSPPASPLLNGAPVQESPQPMTVLEASPPASPLRHLPPGKAVDLEPPKPSDQETGEKVSSPGSRPPIHTTTEDSAGVQTEF.

A lipid anchor (N-myristoyl glycine) is attached at Gly-2. One can recognise a PH domain in the interval 68–192 (RIIFSGNLFQ…WQAVLQDCVR (125 aa)). 2 positions are modified to phosphoserine: Ser-568 and Ser-574. Residues 589 to 747 (WGEQYGDGGD…EDSAGVQTEF (159 aa)) are disordered. Positions 593 to 602 (YGDGGDGSDS) are enriched in gly residues. A phosphoserine mark is found at Ser-605, Ser-626, Ser-641, Ser-645, Ser-648, Ser-667, Ser-672, Ser-683, Ser-693, and Ser-697. Basic and acidic residues predominate over residues 708-722 (VDLEPPKPSDQETGE). The span at 734–747 (HTTTEDSAGVQTEF) shows a compositional bias: polar residues.

Belongs to the Niban family. In terms of processing, as apoptosis proceeds, degraded via an proteasome-independent pathway, probably by caspases.

The protein resides in the cytoplasm. It localises to the cytosol. The protein localises to the cell junction. Its subcellular location is the adherens junction. It is found in the membrane. Functionally, may play a role in apoptosis suppression. The protein is Protein Niban 2 of Rattus norvegicus (Rat).